Consider the following 115-residue polypeptide: Large ribosomal subunit protein bL20c (115 aa).

It belongs to the bacterial ribosomal protein bL20 family.

The protein localises to the plastid. Its subcellular location is the chloroplast. Its function is as follows. Binds directly to 23S ribosomal RNA and is necessary for the in vitro assembly process of the 50S ribosomal subunit. It is not involved in the protein synthesizing functions of that subunit. This chain is Large ribosomal subunit protein bL20c (rpl20), found in Mesostigma viride (Green alga).